A 181-amino-acid polypeptide reads, in one-letter code: Probable cobalt-precorrin-6B C(15)-methyltransferase (decarboxylating) (181 aa).

S-adenosyl-L-methionine contacts are provided by residues T16, 40 to 44 (GCGSG), D61, and A89.

This sequence belongs to the methyltransferase superfamily. Archaeal-type CbiT family.

The enzyme catalyses Co-precorrin-6B + S-adenosyl-L-methionine = Co-precorrin-7 + S-adenosyl-L-homocysteine + CO2. It functions in the pathway cofactor biosynthesis; adenosylcobalamin biosynthesis; cob(II)yrinate a,c-diamide from sirohydrochlorin (anaerobic route): step 8/10. Catalyzes the methylation of C-15 in cobalt-precorrin-6B followed by the decarboxylation of C-12 to form cobalt-precorrin-7. In Methanococcus maripaludis (strain C6 / ATCC BAA-1332), this protein is Probable cobalt-precorrin-6B C(15)-methyltransferase (decarboxylating).